A 42-amino-acid polypeptide reads, in one-letter code: Potassium channel toxin gamma-KTx 1.2 (42 aa).

4 disulfide bridges follow: Cys-5–Cys-23, Cys-11–Cys-34, Cys-20–Cys-39, and Cys-24–Cys-41.

This sequence belongs to the ergtoxin family. Gamma-KTx 1 subfamily. As to expression, expressed by the venom gland.

It localises to the secreted. Its function is as follows. Blocks Kv11/ERG potassium channels. This Centruroides elegans (Bark scorpion) protein is Potassium channel toxin gamma-KTx 1.2.